We begin with the raw amino-acid sequence, 83 residues long: Small ribosomal subunit protein uS17 (83 aa).

Belongs to the universal ribosomal protein uS17 family. Part of the 30S ribosomal subunit.

One of the primary rRNA binding proteins, it binds specifically to the 5'-end of 16S ribosomal RNA. The chain is Small ribosomal subunit protein uS17 from Chlamydia muridarum (strain MoPn / Nigg).